Here is a 276-residue protein sequence, read N- to C-terminus: DNA repair protein RecO (276 aa).

This sequence belongs to the RecO family.

Its function is as follows. Involved in DNA repair and RecF pathway recombination. This Mycobacterium sp. (strain JLS) protein is DNA repair protein RecO.